A 465-amino-acid chain; its full sequence is MSFLVAIVGRANVGKSTLFNVLTNSHDALVFDFEGVTRDRQYGQAKYDDLDYLVVDTGGISDKDVGFDEFMAKQSQIAIDEANLVFFVVDGRSGLTTGDEYVASLLRQKDKKVVVVVNKVDGTDEEAAMAEFYSFGFDKVFAISAAHRRNTQKLVDKFLKKPLNEYYQDYTQTQEHKEQQRHGIHFSLIGRPNVGKSTLTNRMLGEDRVVVFDMPGTTIDSVSIPFERHGQKYTIVDTAGVRKRGKVKQTLEKFSVIKTLQAIQDSNVVVAVVDARQGISDQDLSLIHFAIKNGRALVLAVNKWDGMTEEDRIQVKQDLKRKLFFLQDYVDIHFISALYGTNVGHVFESIDTAYACANKKITTADATRLMQLAVEAHSPPMVGKFRIKLKYAHVGGHNPPVIVIHGNQVSRLPNSYKRYLENFFREALDFRGTPIVFEFKQSENPFADRKNKRSKDEGSKSKKVK.

EngA-type G domains are found at residues 3 to 166 (FLVA…LNEY) and 184 to 358 (IHFS…ACAN). GTP contacts are provided by residues 9 to 16 (GRANVGKS), 56 to 60 (DTGGI), 118 to 121 (NKVD), 190 to 197 (GRPNVGKS), 237 to 241 (DTAGV), and 302 to 305 (NKWD). One can recognise a KH-like domain in the interval 359 to 443 (KKITTADATR…PIVFEFKQSE (85 aa)). Residues 446 to 465 (FADRKNKRSKDEGSKSKKVK) are disordered.

The protein belongs to the TRAFAC class TrmE-Era-EngA-EngB-Septin-like GTPase superfamily. EngA (Der) GTPase family. Associates with the 50S ribosomal subunit.

GTPase that plays an essential role in the late steps of ribosome biogenesis. The chain is GTPase Der from Francisella tularensis subsp. holarctica (strain FTNF002-00 / FTA).